We begin with the raw amino-acid sequence, 561 residues long: Interleukin-1 receptor-like 2 (561 aa).

The signal sequence occupies residues 1 to 21 (MGMPPLLFCWVSFVLPLFVAA). Ig-like C2-type domains lie at 22–113 (GNCT…INLT), 128–215 (SINS…VRNY), and 225–321 (SGGR…TCHA). Topologically, residues 22-338 (GNCTDVYMHH…ILKRPAPDFR (317 aa)) are extracellular. N-linked (GlcNAc...) asparagine glycans are attached at residues N23, N43, N55, N111, and N130. The cysteines at positions 44 and 97 are disulfide-linked. An intrachain disulfide couples C149 to C199. N231, N237, N253, N269, N290, and N302 each carry an N-linked (GlcNAc...) asparagine glycan. C252 and C319 are disulfide-bonded. The chain crosses the membrane as a helical span at residues 339–358 (AYLIGGLMAFLLLAVSILYI). The Cytoplasmic segment spans residues 359-561 (YNTFKVDIVL…LLGHTPRIPG (203 aa)). Positions 384-539 (KLYDAYVLYP…KFWKKVRYHM (156 aa)) constitute a TIR domain. The active site involves E470.

The protein belongs to the interleukin-1 receptor family. Interacts with IL1RAP; the association is enhanced by IL36B indicative for an functional signaling complex and inhibited by IL36RN. In terms of tissue distribution, predominant expression in the lung and epididymis, with lower expression in cerebral cortex and testis. Expression in the brain is non-neuronal and associated with the cerebral vasculature. Not detected in any cell line tested.

It is found in the membrane. The enzyme catalyses NAD(+) + H2O = ADP-D-ribose + nicotinamide + H(+). In terms of biological role, receptor for interleukin-36 (IL36A, IL36B and IL36G). After binding to interleukin-36 associates with the coreceptor IL1RAP to form the interleukin-36 receptor complex which mediates interleukin-36-dependent activation of NF-kappa-B, MAPK and other pathways. The IL-36 signaling system is thought to be present in epithelial barriers and to take part in local inflammatory response; it is similar to the IL-1 system. Seems to be involved in skin inflammatory response by induction of the IL-23/IL-17/IL-22 pathway. Receptor for the interleukin IL36G. Binding to the agonist leads to the activation of NF-kappa-B. This Rattus norvegicus (Rat) protein is Interleukin-1 receptor-like 2 (Il1rl2).